The sequence spans 62 residues: Sperm protamine P1 (62 aa).

The disordered stretch occupies residues 1-62; that stretch reads MARYRHSRSR…RYSRRRRRRY (62 aa).

This sequence belongs to the protamine P1 family. Testis.

The protein localises to the nucleus. It is found in the chromosome. In terms of biological role, protamines substitute for histones in the chromatin of sperm during the haploid phase of spermatogenesis. They compact sperm DNA into a highly condensed, stable and inactive complex. The sequence is that of Sperm protamine P1 (PRM1) from Notamacropus eugenii (Tammar wallaby).